Reading from the N-terminus, the 300-residue chain is MGYVRTGILMAVMTALFLGVGALIGGQSGAIIALVIAAGMNLFTFWNSDRAVLSMHGAHEVDPRAAPDLYNMVRGLADRAGMPMPKLYLIETDQPNAFATGRNPENAAVAVTRGLLRALTPEEVAGVVAHELAHIRNRDTLLMTVTATFAGAISMLANFAFFFGGSSNEEGERPMGLVGTLALMFLAPLAAGLVQMAISRSREYEADRIGAEICGRPLWLASALGKIEGLAQRIDNVRAERNPATAHMFIVNPLHAMGHDRLFATHPNTANRIAALRAMAEGAPQASRIPRVAARRGPWN.

The next 2 helical transmembrane spans lie at 7–24 and 29–46; these read GILM…GALI and GAII…FTFW. His-130 is a binding site for Zn(2+). Glu-131 is an active-site residue. His-134 lines the Zn(2+) pocket. 2 consecutive transmembrane segments (helical) span residues 145–165 and 174–194; these read VTAT…FFGG and PMGL…AGLV. Glu-203 is a binding site for Zn(2+).

Belongs to the peptidase M48B family. Zn(2+) is required as a cofactor.

The protein localises to the cell inner membrane. In Cereibacter sphaeroides (strain ATCC 17029 / ATH 2.4.9) (Rhodobacter sphaeroides), this protein is Protease HtpX homolog.